Consider the following 336-residue polypeptide: Small ribosomal subunit protein uS2 (336 aa).

The protein belongs to the universal ribosomal protein uS2 family.

The chain is Small ribosomal subunit protein uS2 from Beijerinckia indica subsp. indica (strain ATCC 9039 / DSM 1715 / NCIMB 8712).